Consider the following 202-residue polypeptide: Small ribosomal subunit protein uS4 (202 aa).

Residues 17–42 form a disordered region; the sequence is ELPGLSRKTPRRAYPPGQHGQARKKR. The S4 RNA-binding domain occupies 90–152; that stretch reads MRLDNTIFRL…DASRKLIETH (63 aa).

Belongs to the universal ribosomal protein uS4 family. As to quaternary structure, part of the 30S ribosomal subunit. Contacts protein S5. The interaction surface between S4 and S5 is involved in control of translational fidelity.

One of the primary rRNA binding proteins, it binds directly to 16S rRNA where it nucleates assembly of the body of the 30S subunit. Functionally, with S5 and S12 plays an important role in translational accuracy. In Acaryochloris marina (strain MBIC 11017), this protein is Small ribosomal subunit protein uS4.